The chain runs to 451 residues: Subtilase-type proteinase psp3 (451 aa).

The signal sequence occupies residues 1-20; it reads MRVSWISGLLLVAHLAPSSA. The Inhibitor I9 domain maps to 80–161; sequence YIVMFKPSVD…LVEPDRVMHV (82 aa). Positions 169 to 451 constitute a Peptidase S8 domain; the sequence is PWGLARVSHR…PNVLAFNNYE (283 aa). Residues D205, H237, and S394 each act as charge relay system in the active site.

The protein belongs to the peptidase S8 family.

The protein is Subtilase-type proteinase psp3 (psp3) of Schizosaccharomyces pombe (strain 972 / ATCC 24843) (Fission yeast).